The sequence spans 707 residues: G protein-coupled receptor kinase 2 (707 aa).

The N-terminal stretch occupies residues 1 to 190 (MADLEAVLAD…ELNMQLTMND (190 aa)). An RGS domain is found at 54 to 175 (KFDKIFNQKL…LESDKFTRFC (122 aa)). In terms of domain architecture, Protein kinase spans 191–455 (FSVHRIIGRG…PTEVKEHPFF (265 aa)). Residues 197–205 (IGRGGFGEV) and K220 contribute to the ATP site. The Proton acceptor role is filled by D318. In terms of domain architecture, AGC-kinase C-terminal spans 456–523 (KDVDWQTVYL…VISERWQNEI (68 aa)). Residues 558–658 (DVIVHGYIKK…WHTSLRTAHK (101 aa)) enclose the PH domain.

The protein belongs to the protein kinase superfamily. AGC Ser/Thr protein kinase family. GPRK subfamily. In terms of assembly, interacts with amx-2; the interaction promotes phosphorylation of amx-2. Expressed in many neurons in the adult including the ASH neurons and other sensory neurons, many interneurons, and motor neurons of the ventral nerve cord. Expressed broadly in head neurons and is detected in several head acetylcholine neurons including the AVA, AVB, AVD and AVE premotor interneurons, the SMD and RMD head motor neurons, and the AIN, AIY, SIA, SIB and SAA interneurons. Expressed in HSN motor neurons and VC4/VC5 motor neurons. Also expressed in vulval muscle cells. Expressed in premotor and RIS interneurons. Expressed in ciliated neurons such as AWA, AWB, AWC, ASH and ADF olfactory and nociceptive neurons, and in chemosensory ASH neurons. Expressed in RMG neurons and AVK interneurons.

The catalysed reaction is [G-protein-coupled receptor] + ATP = [G-protein-coupled receptor]-phosphate + ADP + H(+). Functionally, specifically phosphorylates the activated forms of G protein-coupled receptors. Required in adult sensory neurons for chemotaxis. Plays a role in the ASH sensory neurons in the chemotaxis response to NaCl where it is likely to modulate the strength of the NaCl avoidance response which occurs at high NaCl concentrations. Required in the HSN motor neurons for normal egg laying by promoting phosphorylation of amine oxidase amx-2 which inhibits amx-2 activity, preventing metabolism of serotonin. Acts in head acetylcholine neurons to positively regulate locomotion. Inactivates dopamine receptor dop-3 which leads to inactivation of guanine nucleotide-binding protein G(o) subunit goa-1 and activation of the unc-77/nca-1 and nca-2 ion channel proteins. Acts as a positive regulator of swimming by inactivating two dopamine receptors, dop-3 in the premotor interneurons that negatively controls early swimming through the nca ion channel, and dop-1 in the RIS neuron that inhibits late-stage swimming via the signaling of FMRFamide-like neuropeptide flp-11. Controls movement quiescence by negatively regulating multiple targets including egl-4 in ciliated neurons, the level of ligands of the neuropeptide receptor npr-1 in RMG neurons, and the secretion of flp-1 from AVK interneurons. In Caenorhabditis elegans, this protein is G protein-coupled receptor kinase 2 (grk-2).